Here is a 98-residue protein sequence, read N- to C-terminus: NADH-ubiquinone oxidoreductase chain 4L (98 aa).

The next 3 helical transmembrane spans lie at 2 to 22 (TQAS…TLIF), 29 to 49 (TLLC…MTAL), and 61 to 81 (IVML…LAMI).

It belongs to the complex I subunit 4L family. In terms of assembly, core subunit of respiratory chain NADH dehydrogenase (Complex I) which is composed of 45 different subunits.

It is found in the mitochondrion inner membrane. The enzyme catalyses a ubiquinone + NADH + 5 H(+)(in) = a ubiquinol + NAD(+) + 4 H(+)(out). Functionally, core subunit of the mitochondrial membrane respiratory chain NADH dehydrogenase (Complex I) which catalyzes electron transfer from NADH through the respiratory chain, using ubiquinone as an electron acceptor. Part of the enzyme membrane arm which is embedded in the lipid bilayer and involved in proton translocation. The sequence is that of NADH-ubiquinone oxidoreductase chain 4L (MT-ND4L) from Calomys musculinus (Drylands vesper mouse).